The chain runs to 108 residues: Peptidyl-prolyl cis-trans isomerase FKBP1B (108 aa).

One can recognise a PPIase FKBP-type domain in the interval 20-108; it reads GQICVVHYTG…IFDVELLNLE (89 aa).

It belongs to the FKBP-type PPIase family. FKBP1 subfamily. Identified in a complex composed of RYR2, FKBP1B, PKA catalytic subunit, PRKAR2A, AKAP6, and the protein phosphatases PP2A and PP1. Interacts directly with RYR2. As to expression, detected in heart muscle (at protein level). Ubiquitous.

It is found in the cytoplasm. The protein localises to the sarcoplasmic reticulum. It carries out the reaction [protein]-peptidylproline (omega=180) = [protein]-peptidylproline (omega=0). Inhibited by both FK506 and rapamycin. In terms of biological role, has the potential to contribute to the immunosuppressive and toxic effects of FK506 and rapamycin. PPIases accelerate the folding of proteins. It catalyzes the cis-trans isomerization of proline imidic peptide bonds in oligopeptides. This chain is Peptidyl-prolyl cis-trans isomerase FKBP1B (Fkbp1b), found in Rattus norvegicus (Rat).